A 201-amino-acid polypeptide reads, in one-letter code: Large ribosomal subunit protein uL4 (201 aa).

The interval 44-71 (RAQKTRAEVSGSGKKPWRQKGTGRARSG) is disordered.

It belongs to the universal ribosomal protein uL4 family. In terms of assembly, part of the 50S ribosomal subunit.

One of the primary rRNA binding proteins, this protein initially binds near the 5'-end of the 23S rRNA. It is important during the early stages of 50S assembly. It makes multiple contacts with different domains of the 23S rRNA in the assembled 50S subunit and ribosome. In terms of biological role, forms part of the polypeptide exit tunnel. This is Large ribosomal subunit protein uL4 from Photorhabdus laumondii subsp. laumondii (strain DSM 15139 / CIP 105565 / TT01) (Photorhabdus luminescens subsp. laumondii).